Reading from the N-terminus, the 425-residue chain is Kynureninase (425 aa).

Residues leucine 105, threonine 106, 133–136 (FPSD), aspartate 218, histidine 221, and tyrosine 243 contribute to the pyridoxal 5'-phosphate site. Lysine 244 is modified (N6-(pyridoxal phosphate)lysine). Pyridoxal 5'-phosphate contacts are provided by tryptophan 274 and asparagine 302.

The protein belongs to the kynureninase family. As to quaternary structure, homodimer. It depends on pyridoxal 5'-phosphate as a cofactor.

The catalysed reaction is L-kynurenine + H2O = anthranilate + L-alanine + H(+). The enzyme catalyses 3-hydroxy-L-kynurenine + H2O = 3-hydroxyanthranilate + L-alanine + H(+). The protein operates within amino-acid degradation; L-kynurenine degradation; L-alanine and anthranilate from L-kynurenine: step 1/1. It functions in the pathway cofactor biosynthesis; NAD(+) biosynthesis; quinolinate from L-kynurenine: step 2/3. Catalyzes the cleavage of L-kynurenine (L-Kyn) and L-3-hydroxykynurenine (L-3OHKyn) into anthranilic acid (AA) and 3-hydroxyanthranilic acid (3-OHAA), respectively. The sequence is that of Kynureninase from Christiangramia forsetii (strain DSM 17595 / CGMCC 1.15422 / KT0803) (Gramella forsetii).